A 388-amino-acid polypeptide reads, in one-letter code: Formate-dependent phosphoribosylglycinamide formyltransferase (388 aa).

Residues glutamate 15–leucine 16 and glutamate 75 contribute to the N(1)-(5-phospho-beta-D-ribosyl)glycinamide site. ATP is bound by residues arginine 107, lysine 148, serine 153–glutamine 158, glutamate 188–leucine 191, and glutamate 196. The 191-residue stretch at aspartate 112–leucine 302 folds into the ATP-grasp domain. Mg(2+) is bound by residues glutamate 261 and glutamate 273. N(1)-(5-phospho-beta-D-ribosyl)glycinamide is bound by residues aspartate 280, lysine 350, and arginine 357–arginine 358.

It belongs to the PurK/PurT family. In terms of assembly, homodimer.

It catalyses the reaction N(1)-(5-phospho-beta-D-ribosyl)glycinamide + formate + ATP = N(2)-formyl-N(1)-(5-phospho-beta-D-ribosyl)glycinamide + ADP + phosphate + H(+). It participates in purine metabolism; IMP biosynthesis via de novo pathway; N(2)-formyl-N(1)-(5-phospho-D-ribosyl)glycinamide from N(1)-(5-phospho-D-ribosyl)glycinamide (formate route): step 1/1. Involved in the de novo purine biosynthesis. Catalyzes the transfer of formate to 5-phospho-ribosyl-glycinamide (GAR), producing 5-phospho-ribosyl-N-formylglycinamide (FGAR). Formate is provided by PurU via hydrolysis of 10-formyl-tetrahydrofolate. The protein is Formate-dependent phosphoribosylglycinamide formyltransferase of Parasynechococcus marenigrum (strain WH8102).